Reading from the N-terminus, the 320-residue chain is ATP-dependent 6-phosphofructokinase (320 aa).

Residue glycine 12 coordinates ATP. ADP contacts are provided by residues 22 to 26 and 55 to 60; these read RGVVR and RYSVSD. Residues 73 to 74 and 103 to 106 each bind ATP; these read RF and GDGS. Aspartate 104 serves as a coordination point for Mg(2+). A substrate-binding site is contributed by 126 to 128; it reads TID. The active-site Proton acceptor is aspartate 128. Arginine 155 provides a ligand contact to ADP. Substrate-binding positions include arginine 163 and 170–172; that span reads MGR. ADP-binding positions include 186-188, lysine 212, and 214-216; these read GCE and KKH. Residues glutamate 223, arginine 244, and 250–253 contribute to the substrate site; that span reads HIQR.

Belongs to the phosphofructokinase type A (PFKA) family. ATP-dependent PFK group I subfamily. Prokaryotic clade 'B1' sub-subfamily. As to quaternary structure, homotetramer. Mg(2+) serves as cofactor.

The protein localises to the cytoplasm. It carries out the reaction beta-D-fructose 6-phosphate + ATP = beta-D-fructose 1,6-bisphosphate + ADP + H(+). Its pathway is carbohydrate degradation; glycolysis; D-glyceraldehyde 3-phosphate and glycerone phosphate from D-glucose: step 3/4. With respect to regulation, allosterically activated by ADP and other diphosphonucleosides, and allosterically inhibited by phosphoenolpyruvate. Functionally, catalyzes the phosphorylation of D-fructose 6-phosphate to fructose 1,6-bisphosphate by ATP, the first committing step of glycolysis. The protein is ATP-dependent 6-phosphofructokinase of Salmonella gallinarum (strain 287/91 / NCTC 13346).